The following is a 272-amino-acid chain: Small ribosomal subunit protein uS2 (272 aa).

Positions Glu-224 to Gln-233 are enriched in basic and acidic residues. Positions Glu-224 to Glu-272 are disordered. A compositionally biased stretch (acidic residues) spans Glu-256–Glu-272.

The protein belongs to the universal ribosomal protein uS2 family.

The sequence is that of Small ribosomal subunit protein uS2 from Corynebacterium glutamicum (strain ATCC 13032 / DSM 20300 / JCM 1318 / BCRC 11384 / CCUG 27702 / LMG 3730 / NBRC 12168 / NCIMB 10025 / NRRL B-2784 / 534).